The following is a 378-amino-acid chain: MVLLWLTLLLIALPCLLQTKEDPNPPITNLRMKAKAQQLTWDLNRNVTDIECVKDADYSMPAVNNSYCQFGAISLCEVTNYTVRVANPPFSTWILFPENSGKPWAGAENLTCWIHDVDFLSCSWAVGPGAPADVQYDLYLNVANRRQQYECLHYKTDAQGTRIGCRFDDISRLSSGSQSSHILVRGRSAAFGIPCTDKFVVFSQIEILTPPNMTAKCNKTHSFMHWKMRSHFNRKFRYELQIQKRMQPVITEQVRDRTSFQLLNPGTYTVQIRARERVYEFLSAWSTPQRFECDQEEGANTRAWRTSLLIALGTLLALVCVFVICRRYLVMQRLFPRIPHMKDPIGDSFQNDKLVVWEAGKAGLEECLVTEVQVVQKT.

An N-terminal signal peptide occupies residues 1 to 18; that stretch reads MVLLWLTLLLIALPCLLQ. Topologically, residues 19–305 are extracellular; it reads TKEDPNPPIT…EEGANTRAWR (287 aa). N46, N64, N80, and N109 each carry an N-linked (GlcNAc...) asparagine glycan. 4 disulfides stabilise this stretch: C52/C68, C76/C195, C112/C122, and C151/C165. 2 N-linked (GlcNAc...) asparagine glycosylation sites follow: N212 and N218. C217 and C293 are oxidised to a cystine. The WSXWS motif signature appears at 282–286; sequence LSAWS. A helical transmembrane segment spans residues 306-325; sequence TSLLIALGTLLALVCVFVIC. Over 326-378 the chain is Cytoplasmic; it reads RRYLVMQRLFPRIPHMKDPIGDSFQNDKLVVWEAGKAGLEECLVTEVQVVQKT. The Box 1 motif signature appears at 334 to 342; sequence LFPRIPHMK.

The protein belongs to the type I cytokine receptor family. Type 5 subfamily. In terms of assembly, interacts with IL3. Heterodimer of an alpha and a beta subunit. The beta subunit is common to the IL3, IL5 and GM-CSF receptors. Post-translationally, ubiquitinated by RNFT2 in response to IL3. Ubiquitination leads ligand-induced degradation by the proteasome. Ubiquitinated by RNF128 via 'Lys-27'-linked polyubiquitination, facilitating its degradation through the lysosomal pathway.

It is found in the cell membrane. In terms of biological role, cell surface receptor for IL3 expressed on hematopoietic progenitor cells, monocytes and B-lymphocytes that controls the production and differentiation of hematopoietic progenitor cells into lineage-restricted cells. Ligand stimulation rapidly induces hetrodimerization with IL3RB, phosphorylation and enzyme activity of effector proteins such as JAK2 and PI3K that play a role in signaling cell proliferation and differentiation. Activation of JAK2 leads to STAT5-mediated transcriptional program. The polypeptide is Interleukin-3 receptor subunit alpha (Homo sapiens (Human)).